Reading from the N-terminus, the 59-residue chain is Cecropin-B2 (59 aa).

The first 23 residues, 1–23 (MNFNKLFLIVILAALLLLGQTEA), serve as a signal peptide directing secretion. Residue Leu57 is modified to Leucine amide.

Belongs to the cecropin family.

The protein resides in the secreted. Cecropins have lytic and antibacterial activity against several Gram-positive and Gram-negative bacteria. In Culex pipiens pipiens (Northern house mosquito), this protein is Cecropin-B2 (CECB2).